The sequence spans 299 residues: Troponin T, cardiac muscle (299 aa).

Residues 1 to 71 show a composition bias toward acidic residues; that stretch reads MSDAEEEVVE…EARDAEDGPV (71 aa). Disordered stretches follow at residues 1 to 97 and 137 to 220; these read MSDA…GERV and DRIE…EKKK. The residue at position 2 (Ser-2) is an N-acetylserine. Phosphoserine is present on Ser-2. 2 stretches are compositionally biased toward basic and acidic residues: residues 137 to 185 and 204 to 220; these read DRIE…DEAR and QTER…EKKK. Thr-205 carries the phosphothreonine; by PKC/PRKCA modification. Phosphoserine; by PKC/PRKCA is present on Ser-209. Thr-214 is modified (phosphothreonine; by PKC/PRKCA and RAF1). Position 295 is a phosphothreonine; by PKC/PRKCA (Thr-295).

This sequence belongs to the troponin T family. Post-translationally, phosphorylation at Thr-214 by PRKCA induces significant reduction in myofilament calcium sensitivity and actomyosin ATPase activity.

In terms of biological role, troponin T is the tropomyosin-binding subunit of troponin, the thin filament regulatory complex which confers calcium-sensitivity to striated muscle actomyosin ATPase activity. The chain is Troponin T, cardiac muscle (Tnnt2) from Rattus norvegicus (Rat).